The sequence spans 152 residues: Small ribosomal subunit protein uS5 (152 aa).

In terms of domain architecture, S5 DRBM spans 14-77 (FEEVIVNIGR…DDAHKNLVKV (64 aa)).

Belongs to the universal ribosomal protein uS5 family. In terms of assembly, part of the 30S ribosomal subunit. Contacts proteins S4 and S8.

Its function is as follows. With S4 and S12 plays an important role in translational accuracy. Located at the back of the 30S subunit body where it stabilizes the conformation of the head with respect to the body. The protein is Small ribosomal subunit protein uS5 of Sulfurovum sp. (strain NBC37-1).